The chain runs to 809 residues: Protein TRC8 homolog (809 aa).

11 consecutive transmembrane segments (helical) span residues 124–144 (TVKF…FMLW), 147–167 (HLVM…SYWS), 200–220 (VMSL…FAYI), 233–253 (MPII…AKVV), 256–276 (LPVV…MQSA), 350–370 (LVDG…ISMF), 392–412 (LGTV…LTSL), 425–445 (LCLL…PILM), 461–481 (ALSV…HLWS), 488–508 (WLLA…VSLA), and 539–559 (SVEF…LIFE). The RING-type; atypical zinc-finger motif lies at 621–659 (CAICYQEMYSAKITRCRHFFHGVCLRKWLYVQDRCPLCH). Disordered stretches follow at residues 696–724 (NNAA…SSSA) and 752–788 (VASS…TSAA). Residues 711-724 (EASEQAPATSSSSA) are compositionally biased toward low complexity.

Interacts with VHL. Interacts with the MPN domain of CSN5. Interacts with EIF3F and EIF3H.

It localises to the endoplasmic reticulum membrane. Its function is as follows. Plays a role in growth inhibition that is dependent upon COP9 signalosome subunits CSN5 and CSN6. May modulate signalosome levels or compartmentalization. Probably functions in the same or a related pathway to VHL during early midline development. This chain is Protein TRC8 homolog, found in Drosophila melanogaster (Fruit fly).